The sequence spans 358 residues: UDP-N-acetylglucosamine--N-acetylmuramyl-(pentapeptide) pyrophosphoryl-undecaprenol N-acetylglucosamine transferase (358 aa).

Ser-197 and Gln-288 together coordinate UDP-N-acetyl-alpha-D-glucosamine.

This sequence belongs to the glycosyltransferase 28 family. MurG subfamily.

The protein localises to the cell membrane. The enzyme catalyses Mur2Ac(oyl-L-Ala-gamma-D-Glu-L-Lys-D-Ala-D-Ala)-di-trans,octa-cis-undecaprenyl diphosphate + UDP-N-acetyl-alpha-D-glucosamine = beta-D-GlcNAc-(1-&gt;4)-Mur2Ac(oyl-L-Ala-gamma-D-Glu-L-Lys-D-Ala-D-Ala)-di-trans,octa-cis-undecaprenyl diphosphate + UDP + H(+). Its pathway is cell wall biogenesis; peptidoglycan biosynthesis. Its function is as follows. Cell wall formation. Catalyzes the transfer of a GlcNAc subunit on undecaprenyl-pyrophosphoryl-MurNAc-pentapeptide (lipid intermediate I) to form undecaprenyl-pyrophosphoryl-MurNAc-(pentapeptide)GlcNAc (lipid intermediate II). The chain is UDP-N-acetylglucosamine--N-acetylmuramyl-(pentapeptide) pyrophosphoryl-undecaprenol N-acetylglucosamine transferase from Streptococcus agalactiae serotype Ia (strain ATCC 27591 / A909 / CDC SS700).